Consider the following 384-residue polypeptide: Glucans biosynthesis protein C (384 aa).

10 helical membrane passes run 17 to 37 (AWLM…THSW), 54 to 74 (FIHA…SYML), 91 to 111 (VGIP…ILLQ), 140 to 160 (LWFL…FTWF), 173 to 193 (AISL…YAAI), 212 to 232 (FIVM…LAFI), 240 to 260 (FTTP…AYLL), 274 to 294 (TESV…FSLG), 311 to 331 (ASLF…AYIT), and 338 to 358 (LIGF…LYEI).

This sequence belongs to the acyltransferase 3 family. OpgC subfamily.

The protein resides in the cell membrane. The protein operates within glycan metabolism; osmoregulated periplasmic glucan (OPG) biosynthesis. In terms of biological role, necessary for the succinyl substitution of periplasmic glucans. Could catalyze the transfer of succinyl residues from the cytoplasmic side of the membrane to the nascent glucan backbones on the periplasmic side of the membrane. In Salmonella schwarzengrund (strain CVM19633), this protein is Glucans biosynthesis protein C.